Reading from the N-terminus, the 101-residue chain is Small ribosomal subunit protein uS14 (101 aa).

The protein belongs to the universal ribosomal protein uS14 family. Part of the 30S ribosomal subunit. Contacts proteins S3 and S10.

Binds 16S rRNA, required for the assembly of 30S particles and may also be responsible for determining the conformation of the 16S rRNA at the A site. The chain is Small ribosomal subunit protein uS14 from Stutzerimonas stutzeri (strain A1501) (Pseudomonas stutzeri).